A 218-amino-acid chain; its full sequence is Transcription initiation factor TFIID subunit 10 (218 aa).

Low complexity-rich tracts occupy residues 1 to 21 (MSCSGSGADPEAAPASAASAP) and 29 to 39 (APAALPSSTAA). The tract at residues 1–85 (MSCSGSGADP…GAAPVSAGGA (85 aa)) is disordered. Serine 2 carries the N-acetylserine modification. Serine 44 is modified (phosphoserine). Position 48 is a phosphothreonine (threonine 48). The segment covering 48 to 62 (TAGGPGAGAAAGGTG) has biased composition (gly residues). Residues 187 to 189 (KSK) carry the [KR]-[STA]-K motif motif. An Allysine; alternate modification is found at lysine 189. The residue at position 189 (lysine 189) is an N6,N6,N6-trimethyllysine; alternate.

It belongs to the TAF10 family. In terms of assembly, component of the TFIID basal transcription factor complex, composed of TATA-box-binding protein TBP, and a number of TBP-associated factors (TAFs), including TAF1, TAF2, TAF3, TAF4, TAF5, TAF6, TAF7, TAF8, TAF9, TAF10, TAF11, TAF12 and TAF13. Component of the TATA-binding protein-free TAF complex (TFTC), the PCAF histone acetylase complex and the STAGA transcription coactivator-HAT complex. The PCAF complex consists at least of TADA2L/ADA2, TADA3L/ADA3, SUPT3H, TAF5L TAF6L, TAF9, TAF10, TAF12 and TRRAP. The TFTC-HAT complex consists at least of TAF5L, TAF6L, TADA3L, SUPT3H, TAF2, TAF4, TAF5, GCN5L2/GCN5, TAF10 and TRRAP. The STAGA transcription coactivator-HAT complex consists at least of SUPT3H, GCN5L2, TAF5L, TAF6L, SUPT7L, TADA3L, TAD1L, TAF10, TAF12, TRRAP and TAF9. The STAGA core complex is associated with a subcomplex required for histone deubiquitination composed of ATXN7L3, ENY2 and USP22. Interacts with TAF3. Interacts with LOXL2. Interacts with TAF12 isoform TAFII20; the interaction is direct. Post-translationally, monomethylated at Lys-189 by SETD7, leading to increased affinity for RNA polymerase II. In terms of processing, lysine deamination at Lys-189 to form allysine is mediated by LOXL2. Allysine formation by LOXL2 results in release of TAF10 from promoters, leading to inhibition of TFIID-dependent transcription.

Its subcellular location is the nucleus. The TFIID basal transcription factor complex plays a major role in the initiation of RNA polymerase II (Pol II)-dependent transcription. TFIID recognizes and binds promoters with or without a TATA box via its subunit TBP, a TATA-box-binding protein, and promotes assembly of the pre-initiation complex (PIC). The TFIID complex consists of TBP and TBP-associated factors (TAFs), including TAF1, TAF2, TAF3, TAF4, TAF5, TAF6, TAF7, TAF8, TAF9, TAF10, TAF11, TAF12 and TAF13. TAF10 is also component of the PCAF histone acetylase complex, the TATA-binding protein-free TAF complex (TFTC) and the STAGA transcription coactivator-HAT complex. May regulate cyclin E expression. This is Transcription initiation factor TFIID subunit 10 (TAF10) from Homo sapiens (Human).